A 515-amino-acid polypeptide reads, in one-letter code: Cytosolic Fe-S cluster assembly factor NAR1 homolog (515 aa).

Residues Cys19, Cys65, Cys68, Cys71, Cys192, Cys247, Cys428, and Cys432 each contribute to the [4Fe-4S] cluster site.

Belongs to the NARF family.

Its function is as follows. Component of the cytosolic Fe/S protein assembly machinery. Required for maturation of extramitochondrial Fe/S proteins. May play a role in the transfer of pre-assembled Fe/S clusters to target apoproteins. The polypeptide is Cytosolic Fe-S cluster assembly factor NAR1 homolog (Schizosaccharomyces japonicus (strain yFS275 / FY16936) (Fission yeast)).